Consider the following 227-residue polypeptide: Phosphoribosylformylglycinamidine synthase subunit PurQ (227 aa).

Residues 2-227 (RWAIVRFPGA…FLGLVREVAR (226 aa)) form the Glutamine amidotransferase type-1 domain. Cys-85 (nucleophile) is an active-site residue. Active-site residues include His-200 and Glu-202.

Part of the FGAM synthase complex composed of 1 PurL, 1 PurQ and 2 PurS subunits.

It is found in the cytoplasm. It carries out the reaction N(2)-formyl-N(1)-(5-phospho-beta-D-ribosyl)glycinamide + L-glutamine + ATP + H2O = 2-formamido-N(1)-(5-O-phospho-beta-D-ribosyl)acetamidine + L-glutamate + ADP + phosphate + H(+). It catalyses the reaction L-glutamine + H2O = L-glutamate + NH4(+). Its pathway is purine metabolism; IMP biosynthesis via de novo pathway; 5-amino-1-(5-phospho-D-ribosyl)imidazole from N(2)-formyl-N(1)-(5-phospho-D-ribosyl)glycinamide: step 1/2. In terms of biological role, part of the phosphoribosylformylglycinamidine synthase complex involved in the purines biosynthetic pathway. Catalyzes the ATP-dependent conversion of formylglycinamide ribonucleotide (FGAR) and glutamine to yield formylglycinamidine ribonucleotide (FGAM) and glutamate. The FGAM synthase complex is composed of three subunits. PurQ produces an ammonia molecule by converting glutamine to glutamate. PurL transfers the ammonia molecule to FGAR to form FGAM in an ATP-dependent manner. PurS interacts with PurQ and PurL and is thought to assist in the transfer of the ammonia molecule from PurQ to PurL. This is Phosphoribosylformylglycinamidine synthase subunit PurQ from Thermus thermophilus (strain ATCC BAA-163 / DSM 7039 / HB27).